Reading from the N-terminus, the 843-residue chain is Eisosome protein 1 (843 aa).

The residue at position 2 (Ser2) is an N-acetylserine. A Phosphoserine modification is found at Ser2. The tract at residues 13–44 (HNIGKTSGGGSRTSSITSSKKSLKHGSKSLRK) is disordered. Positions 33 to 44 (KSLKHGSKSLRK) are enriched in basic residues. Residues Ser88 and Ser130 each carry the phosphoserine modification. The disordered stretch occupies residues 120 to 174 (KMGPKVVRNNSITSATSKTSKESQTKRKSKESPGAAASKAYSMTMETTSLSSQTN). 2 stretches are compositionally biased toward polar residues: residues 127-137 (RNNSITSATSK) and 163-174 (TMETTSLSSQTN). Phosphoserine occurs at positions 182, 401, 584, and 710. A disordered region spans residues 717 to 843 (DLPTQLEKIE…QDAISNQEKK (127 aa)). The residue at position 720 (Thr720) is a Phosphothreonine. The segment covering 752–764 (STAAKEATETSSA) has biased composition (low complexity). Phosphoserine is present on residues Ser763 and Ser775. Basic and acidic residues predominate over residues 781-797 (SGKEDANDCKSAEHSKE). The segment covering 798–810 (ISVSQKAGNNKSL) has biased composition (polar residues). A phosphoserine mark is found at Ser816, Ser828, Ser829, and Ser838.

The protein belongs to the EIS1 family.

It localises to the cytoplasmic granule. Its subcellular location is the cell membrane. Its function is as follows. Required for normal formation of eisosomes, large cytoplasmic protein assemblies that localize to specialized domains on plasma membrane and mark the site of endocytosis. The chain is Eisosome protein 1 (EIS1) from Saccharomyces cerevisiae (strain Lalvin EC1118 / Prise de mousse) (Baker's yeast).